The following is a 113-amino-acid chain: Protein crumbs homolog 3 (113 aa).

Residues 1-24 (MATPGLGVLLAFGLPMLPSGWSLT) form the signal peptide. The tract at residues 23 to 44 (LTAPDPFTNSTTQPPGDESNGG) is disordered. At 25–49 (APDPFTNSTTQPPGDESNGGLSSGA) the chain is on the extracellular side. Asn-31 carries an N-linked (GlcNAc...) asparagine glycan. A helical membrane pass occupies residues 50 to 70 (IVAITVVFSILGVLLIAVGLF). At 71–113 (LLMRKLREKRQTEGTYRPSSEEQVGARAPPPPNLKLPPEERLI) the chain is on the cytoplasmic side. The interaction with EPB41L5 stretch occupies residues 77-113 (REKRQTEGTYRPSSEEQVGARAPPPPNLKLPPEERLI). Residues 80–113 (RQTEGTYRPSSEEQVGARAPPPPNLKLPPEERLI) are disordered. Polar residues predominate over residues 83–92 (EGTYRPSSEE). A PDZ-binding motif is present at residues 110-113 (ERLI).

As to quaternary structure, component of a complex composed of CRB3, PALS1 and PATJ. Interacts (via C-terminus) with PALS1 (via PDZ domain). Interacts with PARD6A. Interacts (via intracellular domain) with EPB41L5. Interacts with WDR83. Expressed in the apical renal tubules (at protein level). Expressed in the retinal pigment epithelium.

Its subcellular location is the apical cell membrane. The protein localises to the cell junction. It is found in the tight junction. Involved in the establishment of cell polarity in mammalian epithelial cells. Regulates the morphogenesis of tight junctions. Involved in promoting phosphorylation and cytoplasmic retention of transcriptional coactivators YAP1 and WWTR1/TAZ which leads to suppression of TGFB1-dependent transcription of target genes such as CCN2/CTGF, SERPINE1/PAI1, SNAI1/SNAIL1 and SMAD7. The polypeptide is Protein crumbs homolog 3 (Crb3) (Mus musculus (Mouse)).